The following is a 436-amino-acid chain: Trigger factor (436 aa).

Residues 161–246 (GDQVNIDFVG…VNSVAAPQLP (86 aa)) enclose the PPIase FKBP-type domain.

It belongs to the FKBP-type PPIase family. Tig subfamily.

It is found in the cytoplasm. The catalysed reaction is [protein]-peptidylproline (omega=180) = [protein]-peptidylproline (omega=0). Functionally, involved in protein export. Acts as a chaperone by maintaining the newly synthesized protein in an open conformation. Functions as a peptidyl-prolyl cis-trans isomerase. This is Trigger factor from Stutzerimonas stutzeri (strain A1501) (Pseudomonas stutzeri).